Consider the following 220-residue polypeptide: Phosphoribosylformylglycinamidine synthase subunit PurQ (220 aa).

Residues 2 to 220 (RVGVVVFPGS…LRSVLAGAKV (219 aa)) form the Glutamine amidotransferase type-1 domain. Cys85 serves as the catalytic Nucleophile. Active-site residues include His193 and Glu195.

Part of the FGAM synthase complex composed of 1 PurL, 1 PurQ and 2 PurS subunits.

The protein localises to the cytoplasm. It catalyses the reaction N(2)-formyl-N(1)-(5-phospho-beta-D-ribosyl)glycinamide + L-glutamine + ATP + H2O = 2-formamido-N(1)-(5-O-phospho-beta-D-ribosyl)acetamidine + L-glutamate + ADP + phosphate + H(+). The enzyme catalyses L-glutamine + H2O = L-glutamate + NH4(+). It participates in purine metabolism; IMP biosynthesis via de novo pathway; 5-amino-1-(5-phospho-D-ribosyl)imidazole from N(2)-formyl-N(1)-(5-phospho-D-ribosyl)glycinamide: step 1/2. Part of the phosphoribosylformylglycinamidine synthase complex involved in the purines biosynthetic pathway. Catalyzes the ATP-dependent conversion of formylglycinamide ribonucleotide (FGAR) and glutamine to yield formylglycinamidine ribonucleotide (FGAM) and glutamate. The FGAM synthase complex is composed of three subunits. PurQ produces an ammonia molecule by converting glutamine to glutamate. PurL transfers the ammonia molecule to FGAR to form FGAM in an ATP-dependent manner. PurS interacts with PurQ and PurL and is thought to assist in the transfer of the ammonia molecule from PurQ to PurL. The polypeptide is Phosphoribosylformylglycinamidine synthase subunit PurQ (Rubrobacter xylanophilus (strain DSM 9941 / JCM 11954 / NBRC 16129 / PRD-1)).